The sequence spans 162 residues: MINNDSALQLSNVLNQECTRSQVHCQSKKRALEIISELAAKQLGLSSQIVFEAILTREKMGSTGIGNGIAIPHGKLEEDTLRAVGVFVQLETPIAFDAIDNQPVDLLFALLVPADQTKTHLHTLSLVAKRLADKTICRRLRAAQSDEELYEIITEAGSNNEA.

The 145-residue stretch at Asn-12–Ala-156 folds into the PTS EIIA type-2 domain. The active-site Tele-phosphohistidine intermediate is the His-73.

Its subcellular location is the cytoplasm. Functionally, seems to have a role in regulating nitrogen assimilation. The polypeptide is Nitrogen regulatory protein (ptsN) (Klebsiella oxytoca).